Here is a 352-residue protein sequence, read N- to C-terminus: DNA integrity scanning protein DisA (352 aa).

A DAC domain is found at 3 to 143 (PQELIEKIKL…NYKYVVNQVD (141 aa)). ATP-binding positions include G71, L89, and 102–106 (TRHRT).

It belongs to the DisA family. Homooctamer. It depends on Mg(2+) as a cofactor.

It catalyses the reaction 2 ATP = 3',3'-c-di-AMP + 2 diphosphate. Participates in a DNA-damage check-point. DisA forms globular foci that rapidly scan along the chromosomes searching for lesions. Its function is as follows. Also has diadenylate cyclase activity, catalyzing the condensation of 2 ATP molecules into cyclic di-AMP (c-di-AMP). c-di-AMP likely acts as a signaling molecule that may couple DNA integrity with a cellular process. The sequence is that of DNA integrity scanning protein DisA from Thermotoga neapolitana (strain ATCC 49049 / DSM 4359 / NBRC 107923 / NS-E).